A 1079-amino-acid polypeptide reads, in one-letter code: MAASGPAAAAPSGVLVTCGLEQVLEALKLLLSPGGSGSSSLQNTKHDVLLQTLKSNLSALEAKFLKDAQWKKLKALRDELADKAEWPQSSEDITWSFTSQTLLLLLCLKEVLARLVADFNPGKPNPRTPEAAPALSPDTLSVSQQKTFQSVLQFVVTLGVCPYLIPGVGVPLRDRTEFGAVVQDVVRLEAAPHATRRLYICCRVLLDLAQHASLGSLIFCRHFGDIAAGLCQLGFCPTKRKPPGPVEEVLTEEERTLSRRALRDILDQVYQPLAVRELLTLQGGPRQPCTDVKTQLRCRAQAPAWLRRLCGQLLSERLMRPNGVQAVVRGILEGAGAGAAGGSDAEATAADWRKCDLIAKILASCPQQSLSPESYYKDICPQILDLFHLQDKLTARQFQRVATTTFITLSRERPELAAKYLLQPMLAPLQRCLSTAEIPESDMVPGAILVTEEELSRCVEDVFKVYVVANEPVPVLLDSLLPLLRVFFSLYCFTQQSVSHIRSLCQEILLWILVKLERKKAIASLKGFSGLDKTVPTLHPQCQFRAATHGGIVITAKEAISDDEDEALYQKVSSEQSQVEHLGDLLLHCQQCGLAGDFFIFCLKELSHLLEDREAEFTPKPSCYASLLELEHHQTLLIEDQERKLQVLQLLAVLCEKMSEQIFTHVTQVVDFVAATLQRACAGLAHEAESAVGSQTLSMSMGLVAVMLGGAVQLKSSDFAVLKQLLPLLERVSNTYPDPVIQELAADLRITISTHGAFSTDAVSTAAQSTLNQKDPGQKIEEQRQTSPDISTEGAQKPPRTGQGSSGPCTATSQPPGSITTQQFREVLLSACDPEVPTRAAALRTLARWVEQREARALEEQKKLLQIFLENLEHEDSFVYLSAIQGIALLSDVYPEEILVDLLAKYDSGKDKHTPETRMKVGEVLMRVVRALGDMVSKYREPLIHTFLRGVRDPDAAHRASSLANLGELCQCLHFLLGPVVHEVTACLIAVAKTDNDVQVRRAAVHVVVLLLRGLSQKATEVLSDVLRDLYHLLKHVVRLEPDDVAKLHAQLALEELDEIMRNFLFPPQKLEKKIVVLP.

A helical membrane pass occupies residues 473–493 (VPVLLDSLLPLLRVFFSLYCF). Position 561 is a phosphoserine (Ser561). The disordered stretch occupies residues 767 to 818 (AQSTLNQKDPGQKIEEQRQTSPDISTEGAQKPPRTGQGSSGPCTATSQPPGS). Composition is skewed to polar residues over residues 785–794 (QTSPDISTEG) and 802–818 (GQGSSGPCTATSQPPGS). 2 HEAT repeats span residues 864–902 (LLQIFLENLEHEDSFVYLSAIQGIALLSDVYPEEILVDL) and 937–973 (SKYREPLIHTFLRGVRDPDAAHRASSLANLGELCQCL).

The protein belongs to the Tango6 family.

The protein localises to the membrane. The sequence is that of Transport and Golgi organization protein 6 homolog (Tango6) from Mus musculus (Mouse).